A 121-amino-acid chain; its full sequence is MARIAGINIPPHKHAEIGLTAIFGIGRNRARKICDASGIAYSKKIKDLTDGDLEKIRVQIEQFTIEGDLRRETTMNIKRLMDIGCYRGFRHRRGLPVRGQRTRTNARTRKGPRKGAAALKK.

The tract at residues 94–121 (GLPVRGQRTRTNARTRKGPRKGAAALKK) is disordered.

It belongs to the universal ribosomal protein uS13 family. Part of the 30S ribosomal subunit. Forms a loose heterodimer with protein S19. Forms two bridges to the 50S subunit in the 70S ribosome.

Located at the top of the head of the 30S subunit, it contacts several helices of the 16S rRNA. In the 70S ribosome it contacts the 23S rRNA (bridge B1a) and protein L5 of the 50S subunit (bridge B1b), connecting the 2 subunits; these bridges are implicated in subunit movement. Contacts the tRNAs in the A and P-sites. This Verminephrobacter eiseniae (strain EF01-2) protein is Small ribosomal subunit protein uS13.